We begin with the raw amino-acid sequence, 404 residues long: Growth/differentiation factor 6-A (404 aa).

A signal peptide spans 1-24; that stretch reads MDALRAVAFYALFVFLWSLPCCQS. The propeptide occupies 25-284; it reads AALISQKRSK…LQFKARRRRR (260 aa). The N-linked (GlcNAc...) asparagine glycan is linked to Asn-91. The disordered stretch occupies residues 263-304; the sequence is KSRGDDDEEESALQFKARRRRRTALNNRHGKRHGKKSKSRCS. Residues 278–304 are compositionally biased toward basic residues; the sequence is KARRRRRTALNNRHGKRHGKKSKSRCS. Disulfide bonds link Cys-303-Cys-369, Cys-332-Cys-401, and Cys-336-Cys-403.

It belongs to the TGF-beta family. As to quaternary structure, homodimer; disulfide-linked. In terms of tissue distribution, first expressed in late gastrula stage embryos (9.5 hours post fertilization (hpf)) in anterior neuroectoderm corresponding to the future dorsal part of the brain. Shortly after tailbud formation (11 hpf), expression expands to the entire neural region and is subsequently expressed in derivatives of the lateral neural plate and migrating neural crest cells, with the future midbrain and hindbrain showing strong expression. Also expressed weakly and transiently in the posterior embryo from 11.5 hpf to 15 hpf in the lateral mesoderm, and in ectoderm above the neural keel. At 14 hpf, expressed along the entire length of the embryo and starting around the 16-somite stage, expressed in the dorsal quadrant of the retina, representing the distal tip of the eye anlage. At this stage, also expressed in the hatching gland and the hypochord. At 24 hpf, expressed in the roof plate outlining the fourth brain ventricle, in the posterior hypochord, the primitive gut endoderm, the ventral tail mesenchyme, the dorsal part of the neural tube and the dorsal fin. Weakly expressed in the dorsal part of the posterior spinal cord and in blood cell precursors.

The protein localises to the secreted. Its function is as follows. Growth factor that controls proliferation and cellular differentiation in the retina. Plays a key role in regulating apoptosis during retinal development. Establishes dorsal-ventral positional information in the retina and controls the formation of the retinotectal map. Functions maternally in dorsal/ventral patterning to induce the expression of the zygotic bmp2b and bmp4 genes and ventralize embryos. Zygotic expression does not appear to regulate axis specification, but instead functions to establish the integrity of the axial vessels during embryonic development. May be involved in maintaining the identity of cells of the dorsal-most neural tube and of at least a subset of neural crest cells. This Danio rerio (Zebrafish) protein is Growth/differentiation factor 6-A (gdf6a).